The following is a 159-amino-acid chain: Transcriptional repressor NrdR (159 aa).

A zinc finger spans residues 3–34 (CPFCRHEDTQVVDSRVSEDGAAIRRRRRCSAC). One can recognise an ATP-cone domain in the interval 49–139 (PAVVKKDGSR…VYRRFEDVSE (91 aa)).

This sequence belongs to the NrdR family. Requires Zn(2+) as cofactor.

Its function is as follows. Negatively regulates transcription of bacterial ribonucleotide reductase nrd genes and operons by binding to NrdR-boxes. The sequence is that of Transcriptional repressor NrdR from Burkholderia ambifaria (strain MC40-6).